Consider the following 111-residue polypeptide: Dormancy-associated protein 1 (111 aa).

The interval 30–60 (KDDGASNQLMRSTSIPTTPTTPVTPTTPSSA) is disordered. Residues 41-59 (STSIPTTPTTPVTPTTPSS) show a composition bias toward low complexity.

Belongs to the DRM1/ARP family. As to expression, expressed in axilary buds and in non-growing stems and roots. Detected in sepals, stamens and carpels, but barely detected in petals or leaflets.

The sequence is that of Dormancy-associated protein 1 from Pisum sativum (Garden pea).